Consider the following 724-residue polypeptide: Ribosomal RNA processing protein 1 homolog B (724 aa).

A disordered region spans residues 331–576 (NGAPLSSAED…SKKKKKTMKL (246 aa)). 2 positions are modified to phosphoserine: Ser336 and Ser370. A compositionally biased stretch (basic residues) spans 373–386 (HIHKKKRKKRKRSH). Residues Ser432 and Ser438 each carry the phosphoserine modification. Residues 448-461 (HNKRKRPRKKKLRA) show a composition bias toward basic residues. A compositionally biased stretch (low complexity) spans 483-496 (SGHSQSSAAHISSS). A Phosphoserine modification is found at Ser494. 2 stretches are compositionally biased toward polar residues: residues 513–528 (DSSSDLPVQKSGTPTS) and 548–564 (KTASSTLDPCDPSSQKP). At Lys618 the chain carries N6-acetyllysine. A disordered region spans residues 625–649 (AKNSSATRPQGPAGQLNKTPSSSKK). A compositionally biased stretch (polar residues) spans 640–649 (LNKTPSSSKK). Phosphoserine occurs at positions 668 and 672. Residue Arg678 is modified to Citrulline. The disordered stretch occupies residues 687–724 (PLHGVLKTATSSPASTPLSPMRLPATTPKRRPRAADFF). Thr694 is subject to Phosphothreonine. The span at 694–706 (TATSSPASTPLSP) shows a compositional bias: low complexity. Phosphoserine is present on residues Ser698 and Ser701.

This sequence belongs to the RRP1 family. In terms of assembly, interacts with the transcriptional activator E2F1. Interacts with serine/threonine-protein phosphatase PP1 subunits PPP1CB and PPP1CC but not with PPP1CA. Interacts with 60S ribosomal proteins RPL5 and RPL27, ribosomal processing protein RRP1/NNP1 and other nucleolar proteins including NOP2/NOL1 and FBL. Also interacts with nucleolar protein NPM1/B23. Interacts with splicing factor SRSF1 and LUC7L3/CROP. Interacts with GTPase activator SIPA1. Interacts with H1-10, NCL, PARP1, TRIM28 and YBX3. Citrullinated by PADI4.

It is found in the nucleus. It localises to the nucleolus. The protein resides in the nucleoplasm. The protein localises to the chromosome. Its function is as follows. Positively regulates DNA damage-induced apoptosis by acting as a transcriptional coactivator of proapoptotic target genes of the transcriptional activator E2F1. Likely to play a role in ribosome biogenesis by targeting serine/threonine protein phosphatase PP1 to the nucleolus. Involved in regulation of mRNA splicing. Inhibits SIPA1 GTPase activity. Involved in regulating expression of extracellular matrix genes. Associates with chromatin and may play a role in modulating chromatin structure. The sequence is that of Ribosomal RNA processing protein 1 homolog B (Rrp1b) from Mus musculus (Mouse).